We begin with the raw amino-acid sequence, 168 residues long: Fusion protein P6 (168 aa).

4 helical membrane-spanning segments follow: residues 29–49 (IWPLLLIVAIIYFAPYLAGFF), 52–72 (AGFTGIGGIFSSIATTITPTL), 94–114 (FQSLGMGTQLAVVSGAAALIA), and 143–163 (ALPGWIWIAAGGLAVWALWPS).

Interacts with P3.

The protein resides in the virion membrane. In terms of biological role, mediates the fusion with the host outer membrane during virus entry into the host cell. In Pseudomonas savastanoi pv. phaseolicola (Pseudomonas syringae pv. phaseolicola), this protein is Fusion protein P6 (P6).